The chain runs to 452 residues: Phosphatidylinositol N-acetylglucosaminyltransferase GPI3 subunit (452 aa).

Residues 407-427 form a helical membrane-spanning segment; sequence LYLLCGIVEYMLFFLLEWLYP.

Belongs to the glycosyltransferase group 1 family. Component of the phosphatidylinositol N-acetylglucosaminyltransferase complex composed of at least GPI1, GPI2, GPI3, GPI15, GPI19 and ERI1.

It localises to the endoplasmic reticulum membrane. The catalysed reaction is a 1,2-diacyl-sn-glycero-3-phospho-(1D-myo-inositol) + UDP-N-acetyl-alpha-D-glucosamine = a 6-(N-acetyl-alpha-D-glucosaminyl)-1-(1,2-diacyl-sn-glycero-3-phospho)-1D-myo-inositol + UDP + H(+). It participates in glycolipid biosynthesis; glycosylphosphatidylinositol-anchor biosynthesis. Its activity is regulated as follows. Inhibited by Ras, probably via the interaction between RAS2 and ERI1. Its function is as follows. Catalytic subunit in the complex catalyzing the transfer of N-acetylglucosamine from UDP-N-acetylglucosamine to phosphatidylinositol, the first step of GPI biosynthesis. The protein is Phosphatidylinositol N-acetylglucosaminyltransferase GPI3 subunit (SPT14) of Saccharomyces cerevisiae (strain YJM789) (Baker's yeast).